The sequence spans 275 residues: Large ribosomal subunit protein uL2 (275 aa).

2 disordered regions span residues 24-48 (LTTD…NAGD) and 224-264 (VMNP…NKRT). A compositionally biased stretch (basic residues) spans 31–42 (KPLTKTKQRTGG).

It belongs to the universal ribosomal protein uL2 family. In terms of assembly, part of the 50S ribosomal subunit. Forms a bridge to the 30S subunit in the 70S ribosome.

Functionally, one of the primary rRNA binding proteins. Required for association of the 30S and 50S subunits to form the 70S ribosome, for tRNA binding and peptide bond formation. It has been suggested to have peptidyltransferase activity; this is somewhat controversial. Makes several contacts with the 16S rRNA in the 70S ribosome. This Koribacter versatilis (strain Ellin345) protein is Large ribosomal subunit protein uL2.